Reading from the N-terminus, the 291-residue chain is Exosome complex component rrp45 (291 aa).

This sequence belongs to the RNase PH family. In terms of assembly, component of the RNA exosome complex. Specifically part of the catalytically inactive RNA exosome core complex (Exo-9) which may associate with the catalytic subunits rrp6 and dis3 in cytoplasmic- and nuclear-specific RNA exosome complex forms. Exo-9 is formed by a hexameric base ring of RNase PH domain-containing subunits and a cap ring consisting of csl4, rrp4 and rrp40.

The protein localises to the cytoplasm. Its subcellular location is the nucleus. The protein resides in the nucleolus. Its function is as follows. Non-catalytic component of the RNA exosome complex which has 3'-&gt;5' exoribonuclease activity and participates in a multitude of cellular RNA processing and degradation events. In the nucleus, the RNA exosome complex is involved in proper maturation of stable RNA species such as rRNA, snRNA and snoRNA, in the elimination of RNA processing by-products and non-coding 'pervasive' transcripts, such as antisense RNA species and cryptic unstable transcripts (CUTs), and of mRNAs with processing defects, thereby limiting or excluding their export to the cytoplasm. In the cytoplasm, the RNA exosome complex is involved in general mRNA turnover and in RNA surveillance pathways, preventing translation of aberrant mRNAs. The catalytic inactive RNA exosome core complex of 9 subunits (Exo-9) is proposed to play a pivotal role in the binding and presentation of RNA for ribonucleolysis, and to serve as a scaffold for the association with catalytic subunits and accessory proteins or complexes. ski6 is part of the hexameric ring of RNase PH domain-containing subunits proposed to form a central channel which threads RNA substrates for degradation. The protein is Exosome complex component rrp45 (rrp45) of Schizosaccharomyces pombe (strain 972 / ATCC 24843) (Fission yeast).